The sequence spans 1157 residues: ATP-dependent helicase/deoxyribonuclease subunit B (1157 aa).

One can recognise a UvrD-like helicase ATP-binding domain in the interval 1-277 (MTLQIIAGKS…KLFLENKRAK (277 aa)). 8–15 (GKSGTGKT) is an ATP binding site. Residues 272–578 (ENKRAKSDSL…EFSLLPPSLD (307 aa)) form the UvrD-like helicase C-terminal domain. Cys794, Cys1115, Cys1118, and Cys1124 together coordinate [4Fe-4S] cluster.

Belongs to the helicase family. AddB/RexB type 1 subfamily. As to quaternary structure, heterodimer of AddA and AddB. The cofactor is Mg(2+). [4Fe-4S] cluster serves as cofactor.

In terms of biological role, the heterodimer acts as both an ATP-dependent DNA helicase and an ATP-dependent, dual-direction single-stranded exonuclease. Recognizes the chi site generating a DNA molecule suitable for the initiation of homologous recombination. The AddB subunit has 5' -&gt; 3' nuclease activity but not helicase activity. This is ATP-dependent helicase/deoxyribonuclease subunit B from Listeria welshimeri serovar 6b (strain ATCC 35897 / DSM 20650 / CCUG 15529 / CIP 8149 / NCTC 11857 / SLCC 5334 / V8).